A 141-amino-acid chain; its full sequence is Histone H2B (141 aa).

Over residues 1–10 the composition is skewed to basic and acidic residues; the sequence is MPPKAAEKKP. Positions 1-49 are disordered; that stretch reads MPPKAAEKKPSTGGKAPAGGKAPAEKKEAGKKTAAAASGDKKKRGKTRK. Residues lysine 8 and lysine 9 each carry the N6-acetyllysine; alternate modification. Glycyl lysine isopeptide (Lys-Gly) (interchain with G-Cter in SUMO); alternate cross-links involve residues lysine 8 and lysine 9. A compositionally biased stretch (low complexity) spans 11–22; sequence STGGKAPAGGKA. Position 15 is an N6-acetyllysine (lysine 15). The residue at position 26 (lysine 26) is an N6-acetyllysine; alternate. Lysine 26 is covalently cross-linked (Glycyl lysine isopeptide (Lys-Gly) (interchain with G-Cter in SUMO); alternate). Residue lysine 27 forms a Glycyl lysine isopeptide (Lys-Gly) (interchain with G-Cter in SUMO) linkage. Lysine 135 is covalently cross-linked (Glycyl lysine isopeptide (Lys-Gly) (interchain with G-Cter in ubiquitin)).

This sequence belongs to the histone H2B family. The nucleosome is a histone octamer containing two molecules each of H2A, H2B, H3 and H4 assembled in one H3-H4 heterotetramer and two H2A-H2B heterodimers. The octamer wraps approximately 147 bp of DNA. In terms of processing, monoubiquitinated by the ubc2-bre1 complex to form H2BK123ub1. H2BK123ub1 gives a specific tag for epigenetic transcriptional activation and is also prerequisite for H3K4me and H3K79me formation. H2BK123ub1 also modulates the formation of double-strand breaks during meiosis and is a prerequisite for DNA-damage checkpoint activation. Post-translationally, acetylated by gcn5 to form H2BK11ac and H2BK16ac. H2BK16ac can also be formed by esa1. Acetylation of N-terminal lysines and particularly formation of H2BK11acK16ac has a positive effect on transcription. Sumoylation to form H2BK6su or H2BK7su, and probably also H2BK16su or H2BK17su, occurs preferentially near the telomeres and represses gene transcription.

The protein localises to the nucleus. It is found in the chromosome. In terms of biological role, core component of nucleosome. Nucleosomes wrap and compact DNA into chromatin, limiting DNA accessibility to the cellular machineries which require DNA as a template. Histones thereby play a central role in transcription regulation, DNA repair, DNA replication and chromosomal stability. DNA accessibility is regulated via a complex set of post-translational modifications of histones, also called histone code, and nucleosome remodeling. This chain is Histone H2B (htb1), found in Aspergillus niger (strain ATCC MYA-4892 / CBS 513.88 / FGSC A1513).